Consider the following 190-residue polypeptide: MAKANEIKRGMAISYNGKLLLVRDIDVQSPSARGASTLYKMRFSDVRTGLKVEERFKGDDILDTISLSRRKVNFSYIDGEEYVFMDDEDYTPYIFKKDQIEDELLFIPEAGLPGMQVLTLEGQVLALELPQTVDMEIVDTAPGIKGASASARNKPATMATGLTIQVPEYLSAGDKIRIHIAERRYMSRAD.

It belongs to the elongation factor P family.

The sequence is that of Elongation factor P-like protein from Serratia proteamaculans (strain 568).